Consider the following 131-residue polypeptide: Small ribosomal subunit protein uS9 (131 aa).

It belongs to the universal ribosomal protein uS9 family.

The protein is Small ribosomal subunit protein uS9 of Glaesserella parasuis serovar 5 (strain SH0165) (Haemophilus parasuis).